We begin with the raw amino-acid sequence, 325 residues long: Tetraacyldisaccharide 4'-kinase (325 aa).

51-58 provides a ligand contact to ATP; the sequence is VVGGAGKT.

This sequence belongs to the LpxK family.

The catalysed reaction is a lipid A disaccharide + ATP = a lipid IVA + ADP + H(+). It participates in glycolipid biosynthesis; lipid IV(A) biosynthesis; lipid IV(A) from (3R)-3-hydroxytetradecanoyl-[acyl-carrier-protein] and UDP-N-acetyl-alpha-D-glucosamine: step 6/6. Functionally, transfers the gamma-phosphate of ATP to the 4'-position of a tetraacyldisaccharide 1-phosphate intermediate (termed DS-1-P) to form tetraacyldisaccharide 1,4'-bis-phosphate (lipid IVA). The chain is Tetraacyldisaccharide 4'-kinase from Paramagnetospirillum magneticum (strain ATCC 700264 / AMB-1) (Magnetospirillum magneticum).